The following is a 426-amino-acid chain: MASSNLIKQLQERGLVAQVTDEEALAERLAQGPIALYCGFDPTADSLHLGHLVPLLCLKRFQQAGHKPVALVGGATGLIGDPSFKAAERKLNTEDTVQEWVDKIRKQVAPFLDFDCGDNSAIAANNYDWFGSMNVLTFLRDIGKHFSVNQMINKEAVKQRLNRDDQGISFTEFSYNLLQGYDFACLNKLHGVALQIGGSDQWGNITSGIDLTRRLHQNQVFGLTVPLITKADGTKFGKTEGGAVWLDPKKTSPYKFYQFWINTADADVYRFLKFFTFMDMAEINALEEEDKNSGKAPRAQYVLAEQVTRLVHGEEGLEAAKRITESLFNGNLSDLSESDFEQLAQDGMPMVELEKGTDLMQALVESELQPSRGQARKAIAANGVTVNGIKQPDPDYVLNENDRYFSNYTLLRRGKKNWCLIKWKSK.

Tyr37 is a binding site for L-tyrosine. A 'HIGH' region motif is present at residues 42–51; sequence PTADSLHLGH. L-tyrosine is bound by residues Tyr175 and Gln179. The short motif at 235–239 is the 'KMSKS' region element; sequence KFGKT. Lys238 lines the ATP pocket. Residues 357–415 form the S4 RNA-binding domain; the sequence is TDLMQALVESELQPSRGQARKAIAANGVTVNGIKQPDPDYVLNENDRYFSNYTLLRRGK.

This sequence belongs to the class-I aminoacyl-tRNA synthetase family. TyrS type 1 subfamily. Homodimer.

The protein localises to the cytoplasm. The catalysed reaction is tRNA(Tyr) + L-tyrosine + ATP = L-tyrosyl-tRNA(Tyr) + AMP + diphosphate + H(+). Functionally, catalyzes the attachment of tyrosine to tRNA(Tyr) in a two-step reaction: tyrosine is first activated by ATP to form Tyr-AMP and then transferred to the acceptor end of tRNA(Tyr). The sequence is that of Tyrosine--tRNA ligase from Klebsiella pneumoniae (strain 342).